A 514-amino-acid polypeptide reads, in one-letter code: Monocarboxylate transporter 10 (514 aa).

Residues 1–64 (MVPSQEEPAA…TGNQEPPEPP (64 aa)) form a disordered region. Over 1–65 (MVPSQEEPAA…GNQEPPEPPE (65 aa)) the chain is Cytoplasmic. A helical membrane pass occupies residues 66-86 (GGWGWLVMLAAMWCNGSVFGI). Over 87–113 (QNAYGVLFVSMLETFGAKDDDNMAFKA) the chain is Extracellular. The chain crosses the membrane as a helical span at residues 114–134 (AWVGSLSMGMIFFCCPIVSVF). Over 135–143 (TDMFGCRRT) the chain is Cytoplasmic. Residues 144–164 (AVLGAAVGFVGLMSSSFVSSI) form a helical membrane-spanning segment. Residues 165–170 (EPLYFT) lie on the Extracellular side of the membrane. A helical transmembrane segment spans residues 171-191 (YGVVFACGCSFAYQPSLVILG). Over 192–199 (HYFKKRLG) the chain is Cytoplasmic. Residues 200–220 (LVNGIVTAGSSVFTILLPLLL) traverse the membrane as a helical segment. Over 221–227 (GNLTSTV) the chain is Extracellular. A helical membrane pass occupies residues 228-248 (GLCYTLRILCIFMFVLFLAGF). Topologically, residues 249–290 (TYRPLVPSSKEKESEDSRSSFFSRRKLSPPKKIFNFALFKET) are cytoplasmic. At Ser-262 the chain carries Phosphoserine. Residues 291–311 (AYAVWAAGIPLALFGYFVPYV) traverse the membrane as a helical segment. Over 312 to 328 (HLMNHVKERFKDVNNKE) the chain is Extracellular. The chain crosses the membrane as a helical span at residues 329-349 (VLFMCIGVTSGVGRLLFGRIA). Asp-350 is a topological domain (cytoplasmic). Residues 351–371 (YLPGVKKVYLQVLSFFFIGLT) form a helical membrane-spanning segment. Residues 372–395 (SMMIPLCSVFGALIALCLIMGLFD) are Extracellular-facing. Residues 396-416 (GCFISIMAPIAFELVGPQDAS) form a helical membrane-spanning segment. Residues 417-418 (QA) lie on the Cytoplasmic side of the membrane. The chain crosses the membrane as a helical span at residues 419 to 439 (IGFLLGFMSIPMTVGPPVAGL). The Extracellular portion of the chain corresponds to 440-450 (LHDKLGSYDLA). Residues 451-471 (FYLAGIPPFIGGAVLCLIPWI) form a helical membrane-spanning segment. Residues 472 to 514 (HSKKQREISKNTGGEKMEKMLANQSSLLSSSSGIFKKESDSII) are Cytoplasmic-facing. 4 positions are modified to phosphoserine: Ser-497, Ser-500, Ser-502, and Ser-503.

The protein belongs to the major facilitator superfamily. Monocarboxylate porter (TC 2.A.1.13) family. In terms of processing, not N-glycosylated. In terms of tissue distribution, strongly expressed in intestine, placenta and liver. In small intestine is detected in the basolateral membrane (at protein level).

It localises to the cell membrane. Its subcellular location is the basolateral cell membrane. It catalyses the reaction L-tryptophan(in) = L-tryptophan(out). The enzyme catalyses L-tyrosine(in) = L-tyrosine(out). The catalysed reaction is L-phenylalanine(in) = L-phenylalanine(out). It carries out the reaction 3,3',5-triiodo-L-thyronine(out) = 3,3',5-triiodo-L-thyronine(in). It catalyses the reaction L-thyroxine(out) = L-thyroxine(in). Functionally, sodium- and proton-independent thyroid hormones and aromatic acids transporter. Mediates both uptake and efflux of 3,5,3'-triiodothyronine (T3) and 3,5,3',5'-tetraiodothyronine (T4) with high affinity, suggesting a role in the homeostasis of thyroid hormone levels. Responsible for low affinity bidirectional transport of the aromatic amino acids, such as phenylalanine, tyrosine, tryptophan and L-3,4-dihydroxyphenylalanine (L-dopa). Plays an important role in homeostasis of aromatic amino acids. This chain is Monocarboxylate transporter 10 (Slc16a10), found in Rattus norvegicus (Rat).